Consider the following 322-residue polypeptide: Protein-L-isoaspartate O-methyltransferase (322 aa).

The tract at residues 1-101 (MSGERAKRFP…AKQGDRSAAP (101 aa)) is disordered. The span at 14-29 (EDLKREPRKPEGRVAE) shows a compositional bias: basic and acidic residues. Low complexity-rich tracts occupy residues 33–51 (AGDA…PAAA) and 76–91 (HAPA…PQGG). Ser170 is an active-site residue.

Belongs to the methyltransferase superfamily. L-isoaspartyl/D-aspartyl protein methyltransferase family.

The protein localises to the cytoplasm. It catalyses the reaction [protein]-L-isoaspartate + S-adenosyl-L-methionine = [protein]-L-isoaspartate alpha-methyl ester + S-adenosyl-L-homocysteine. Functionally, catalyzes the methyl esterification of L-isoaspartyl residues in peptides and proteins that result from spontaneous decomposition of normal L-aspartyl and L-asparaginyl residues. It plays a role in the repair and/or degradation of damaged proteins. This chain is Protein-L-isoaspartate O-methyltransferase, found in Burkholderia pseudomallei (strain 1710b).